Consider the following 175-residue polypeptide: Ribosome maturation factor RimM (175 aa).

A PRC barrel domain is found at 99-171 (AGEYYWFQLK…RILFDLPDGL (73 aa)).

It belongs to the RimM family. Binds ribosomal protein uS19.

Its subcellular location is the cytoplasm. An accessory protein needed during the final step in the assembly of 30S ribosomal subunit, possibly for assembly of the head region. Essential for efficient processing of 16S rRNA. May be needed both before and after RbfA during the maturation of 16S rRNA. It has affinity for free ribosomal 30S subunits but not for 70S ribosomes. The polypeptide is Ribosome maturation factor RimM (Syntrophotalea carbinolica (strain DSM 2380 / NBRC 103641 / GraBd1) (Pelobacter carbinolicus)).